A 460-amino-acid polypeptide reads, in one-letter code: uncharacterized protein (460 aa).

Residues 6-64 (PVKKNNDYEIYIDDFGNMGEGIGKIDNFTVFVKDAVKGEKVRAKIIKVNKSFAIGKLID) enclose the TRAM domain. [4Fe-4S] cluster contacts are provided by C77, C83, C86, and C166. Residues Q290, Y319, E340, and D388 each contribute to the S-adenosyl-L-methionine site. C415 acts as the Nucleophile in catalysis.

It belongs to the class I-like SAM-binding methyltransferase superfamily. RNA M5U methyltransferase family.

This is an uncharacterized protein from Clostridium acetobutylicum (strain ATCC 824 / DSM 792 / JCM 1419 / IAM 19013 / LMG 5710 / NBRC 13948 / NRRL B-527 / VKM B-1787 / 2291 / W).